The sequence spans 55 residues: Neurotoxin X-29S (55 aa).

A signal peptide spans 1–23; the sequence is MKIFFAVLVILVLFSMLIWTAYG. Cystine bridges form between cysteine 30/cysteine 45, cysteine 36/cysteine 50, and cysteine 39/cysteine 53.

In terms of tissue distribution, expressed by the venom gland.

The protein localises to the secreted. This Olivierus martensii (Manchurian scorpion) protein is Neurotoxin X-29S.